We begin with the raw amino-acid sequence, 347 residues long: Calcium homeostasis modulator protein 3 (347 aa).

Residues 1–20 (MDRFRMLFQHLQSSSESVMN) lie on the Cytoplasmic side of the membrane. A central pore region spans residues 9–36 (QHLQSSSESVMNGICLLLAAVTVKIYSS). The chain crosses the membrane as a helical span at residues 21–36 (GICLLLAAVTVKIYSS). Residues 37 to 48 (LDFNCPCLERYN) are Extracellular-facing. Cystine bridges form between Cys-41–Cys-126 and Cys-43–Cys-157. The chain crosses the membrane as a helical span at residues 49–71 (ALYGLGLLLTPPLALFLCGLLVN). Topologically, residues 72 to 98 (RQSVLMVEEWRRPAGHRRKDLGIIRYM) are cytoplasmic. Cys-99 carries the S-palmitoyl cysteine lipid modification. Residues 99 to 124 (CSSVLQRALAAPLVWILLALLDGKCF) form a helical membrane-spanning segment. Over 125–176 (VCAFSNSVDPEKFLDFANMTPRQVQLFLAKVPCKEDELVKNSPARKAVSRYL) the chain is Extracellular. N-linked (GlcNAc...) asparagine glycosylation is present at Asn-142. A helical transmembrane segment spans residues 177–202 (RCLSQAIGWSITLLVIVVAFLARCLR). 2 S-palmitoyl cysteine lipidation sites follow: Cys-200 and Cys-204. Topologically, residues 203 to 347 (PCFDQTVFLQ…GTKLCHQLNV (145 aa)) are cytoplasmic. The segment at 265-290 (GGIPESQESSEPPELREDRDSGNGKA) is disordered. Residues 277–286 (PELREDRDSG) show a composition bias toward basic and acidic residues.

The protein belongs to the CALHM family. Associates with CALHM1 as a pore-forming subunit in a hetero-hexameric channel complex. N-glycosylated. In terms of processing, palmitoylated by ZDHHC3 and ZDHHC15. Palmitoylation positively regulates CALHM1:CALHM3 channel conductance. In terms of tissue distribution, expressed in taste bud cells.

The protein resides in the basolateral cell membrane. It carries out the reaction ATP(in) = ATP(out). The enzyme catalyses Ca(2+)(in) = Ca(2+)(out). The catalysed reaction is Na(+)(in) = Na(+)(out). It catalyses the reaction K(+)(in) = K(+)(out). It carries out the reaction chloride(in) = chloride(out). Its function is as follows. Pore-forming subunit of gustatory voltage-gated ion channels required for sensory perception of sweet, bitter and umami tastes. With CALHM1 forms a fast-activating voltage-gated ATP-release channel in type II taste bud cells, ATP acting as a neurotransmitter to activate afferent neural gustatory pathways. Acts both as a voltage-gated and calcium-activated ion channel: mediates neuronal excitability in response to membrane depolarization and low extracellular Ca(2+) concentration. Has poor ion selectivity and forms a wide pore (around 14 Angstroms) that mediates permeation of small ions including Ca(2+), Na(+), K(+) and Cl(-), as well as larger ions such as ATP(4-). The protein is Calcium homeostasis modulator protein 3 of Mus musculus (Mouse).